Reading from the N-terminus, the 410-residue chain is Magnesium transporter NIPA3 (410 aa).

The Extracellular segment spans residues 1–67 (MGAQVRLPPG…ISANVENKYS (67 aa)). N-linked (GlcNAc...) asparagine glycans are attached at residues N25, N35, and N50. The helical transmembrane segment at 68–88 (LYVGLVLAVSSSIFIGSSFIL) threads the bilayer. The Cytoplasmic segment spans residues 89–114 (KKKGLLQLASKGITRAGQGGHSYLKE). Residues 115-135 (WLWWVGLLSMGVGEAANFAAY) form a helical membrane-spanning segment. A topological domain (extracellular) is located at residue A136. A helical transmembrane segment spans residues 137-157 (FAPATLVTPLGALSVLISAIL). Residues 158-165 (SSYFLNEH) lie on the Cytoplasmic side of the membrane. Residues 166 to 186 (LNIHGKIGCILSILGSTVMVI) traverse the membrane as a helical segment. Residues 187–207 (HAPQEEEVTSLHEMEMKLRDP) lie on the Extracellular side of the membrane. Residues 208–228 (GFISFAVIVTVISLVLILIVA) traverse the membrane as a helical segment. The Cytoplasmic portion of the chain corresponds to 229-233 (PKKGQ). A helical transmembrane segment spans residues 234–254 (TNILVYISICSLIGAFSVSSV). Residues 255–273 (KGLGIAIKELIEWKPVYKH) lie on the Extracellular side of the membrane. The chain crosses the membrane as a helical span at residues 274-294 (PLVFVLLAVLVLSVTTQINYL). Residues 295–304 (NKALDTFNTS) lie on the Cytoplasmic side of the membrane. The chain crosses the membrane as a helical span at residues 305–325 (IVTPIYYVFFTSMVVTCSAIL). The Extracellular portion of the chain corresponds to 326–336 (FQEWYGMTAGD). Residues 337–357 (IIGTLSGFFTIIIGIFLLHAF) traverse the membrane as a helical segment. Topologically, residues 358 to 410 (KNTDITWSELTSTAKKEAVSLNVSENNYVLLENLECSAPGYNDDVTLFSRTDD) are cytoplasmic.

It belongs to the NIPA family.

It is found in the golgi apparatus membrane. The enzyme catalyses Mg(2+)(in) = Mg(2+)(out). Functionally, acts as a Mg(2+) transporter. Can also transport other divalent cations such as Fe(2+), Sr(2+), Ba(2+), Mn(2+), Cu(2+) and Co(2+) but to a much less extent than Mg(2+). In Pongo abelii (Sumatran orangutan), this protein is Magnesium transporter NIPA3 (NIPAL1).